Reading from the N-terminus, the 285-residue chain is Diphthine methyl ester synthase (285 aa).

S-adenosyl-L-methionine contacts are provided by residues leucine 9, aspartate 84, glycine 87, 112-113, and leucine 163; that span reads SI. A Phosphoserine modification is found at serine 171. S-adenosyl-L-methionine-binding residues include valine 225 and histidine 250.

Belongs to the diphthine synthase family.

It catalyses the reaction 2-[(3S)-amino-3-carboxypropyl]-L-histidyl-[translation elongation factor 2] + 4 S-adenosyl-L-methionine = diphthine methyl ester-[translation elongation factor 2] + 4 S-adenosyl-L-homocysteine + 3 H(+). It functions in the pathway protein modification; peptidyl-diphthamide biosynthesis. Functionally, S-adenosyl-L-methionine-dependent methyltransferase that catalyzes four methylations of the modified target histidine residue in translation elongation factor 2 (EF-2), to form an intermediate called diphthine methyl ester. The four successive methylation reactions represent the second step of diphthamide biosynthesis. The protein is Diphthine methyl ester synthase (DPH5) of Bos taurus (Bovine).